The following is a 575-amino-acid chain: Epsin-1 (575 aa).

Residues K11, R25, N30, R63, and H73 each contribute to the a 1,2-diacyl-sn-glycero-3-phospho-(1D-myo-inositol-4,5-bisphosphate) site. Residues 12–144 form the ENTH domain; sequence NIVHNYSEAE…RDEDRLREER (133 aa). The tract at residues 150-186 is disordered; that stretch reads TKEKLAQTATASSAAVGSGPPPEAEQAWPQSSGEEEL. Low complexity predominate over residues 157–167; the sequence is TATASSAAVGS. UIM domains follow at residues 183-202, 208-227, and 233-252; these read EEEL…ADQP, EDDV…HDKE, and GDDL…TGGK. Residues 264 to 575 form a disordered region; the sequence is FTTPAPPQAS…PAPNTNPFLL (312 aa). 8 repeat units span residues 274 to 276, 294 to 296, 306 to 308, 319 to 321, 332 to 334, 349 to 351, 367 to 369, and 377 to 379. The segment at 274-379 is 8 X 3 AA repeats of D-P-W; it reads DPWGGPASVP…APAPAFSDPW (106 aa). 2 stretches are compositionally biased toward low complexity: residues 279–299 and 306–316; these read PASV…WGGP and DPWGGAAPTPA. The segment covering 332–346 has biased composition (low complexity); sequence DPWGGTPAPAAGEGP. Positions 367-379 are enriched in low complexity; it reads DPWAPAPAFSDPW. S382 carries the post-translational modification Phosphoserine. A [DE]-X(1,2)-F-X-X-[FL]-X-X-X-R motif motif is present at residues 401-410; it reads DEFSDFDRLR. S418 and S419 each carry phosphoserine. At T420 the chain carries Phosphothreonine. A phosphoserine mark is found at S434, S446, and S453. Residues 453-467 show a composition bias toward pro residues; sequence SPPPAATPTPTPPTR. 3 positions are modified to phosphothreonine: T459, T463, and T469. Position 472 is a phosphoserine (S472). At T493 the chain carries Phosphothreonine. A run of 2 repeats spans residues 501-503 and 517-519. Residues 501–573 are 3 X 3 AA repeats of N-P-F; it reads NPFLPSGAPP…GPPAPNTNPF (73 aa). Omega-N-methylarginine is present on R533. The segment covering 556–569 has biased composition (pro residues); that stretch reads GLPPMMPPGPPAPN. Repeat unit 3 spans residues 571-573; that stretch reads NPF.

This sequence belongs to the epsin family. In terms of assembly, monomer. Binds clathrin and ZBTB16/ZNF145. Binds ubiquitinated proteins. Interacts with RALBP1 in a complex also containing NUMB and TFAP2A during interphase and mitosis. Interacts with AP2B1. Interacts with UBQLN2. Interacts with ITSN1. Interacts with AP2A1 and AP2A2. Interacts with REPS2; the interaction is direct. Interacts with EPS15; the interaction is direct. Interacts with ENTREP1. Post-translationally, phosphorylated on serine and/or threonine residues in mitotic cells. Phosphorylation reduces interaction with REPS2, AP-2 and the membrane fraction. Depolarization of synaptosomes results in dephosphorylation. In terms of processing, ubiquitinated.

It localises to the cytoplasm. The protein resides in the cell membrane. It is found in the nucleus. Its subcellular location is the membrane. The protein localises to the clathrin-coated pit. Its function is as follows. Binds to membranes enriched in phosphatidylinositol 4,5-bisphosphate (PtdIns(4,5)P2). Modifies membrane curvature and facilitates the formation of clathrin-coated invaginations. Regulates receptor-mediated endocytosis. The polypeptide is Epsin-1 (Epn1) (Mus musculus (Mouse)).